The primary structure comprises 269 residues: Shikimate dehydrogenase (NADP(+)) (269 aa).

Shikimate is bound by residues 14–16 and threonine 61; that span reads SKS. The active-site Proton acceptor is lysine 65. An NADP(+)-binding site is contributed by glutamate 77. The shikimate site is built by asparagine 86 and aspartate 102. Residues 126–130, 149–154, and methionine 213 each bind NADP(+); these read GAGGA and NRTLTK. Shikimate is bound at residue tyrosine 215. Glycine 238 is an NADP(+) binding site.

Belongs to the shikimate dehydrogenase family. As to quaternary structure, homodimer.

It carries out the reaction shikimate + NADP(+) = 3-dehydroshikimate + NADPH + H(+). Its pathway is metabolic intermediate biosynthesis; chorismate biosynthesis; chorismate from D-erythrose 4-phosphate and phosphoenolpyruvate: step 4/7. In terms of biological role, involved in the biosynthesis of the chorismate, which leads to the biosynthesis of aromatic amino acids. Catalyzes the reversible NADPH linked reduction of 3-dehydroshikimate (DHSA) to yield shikimate (SA). This chain is Shikimate dehydrogenase (NADP(+)), found in Actinobacillus succinogenes (strain ATCC 55618 / DSM 22257 / CCUG 43843 / 130Z).